The chain runs to 285 residues: uncharacterized protein (285 aa).

Residues 197 to 217 (PTIGALLSLVSAFFSFIPFLM) form a helical membrane-spanning segment.

It is found in the membrane. This is an uncharacterized protein from Saccharomyces cerevisiae (strain ATCC 204508 / S288c) (Baker's yeast).